The primary structure comprises 592 residues: Aspartate--tRNA(Asp/Asn) ligase (592 aa).

An L-aspartate-binding site is contributed by glutamate 175. The aspartate stretch occupies residues 199–202; it reads QLFK. Arginine 221 is a binding site for L-aspartate. ATP contacts are provided by residues 221-223 and glutamine 230; that span reads RDE. Residue histidine 450 coordinates L-aspartate. ATP is bound at residue glutamate 483. Arginine 490 provides a ligand contact to L-aspartate. 535-538 contributes to the ATP binding site; the sequence is GLDR.

Belongs to the class-II aminoacyl-tRNA synthetase family. Type 1 subfamily. Homodimer.

Its subcellular location is the cytoplasm. The catalysed reaction is tRNA(Asx) + L-aspartate + ATP = L-aspartyl-tRNA(Asx) + AMP + diphosphate. Its function is as follows. Aspartyl-tRNA synthetase with relaxed tRNA specificity since it is able to aspartylate not only its cognate tRNA(Asp) but also tRNA(Asn). Reaction proceeds in two steps: L-aspartate is first activated by ATP to form Asp-AMP and then transferred to the acceptor end of tRNA(Asp/Asn). This is Aspartate--tRNA(Asp/Asn) ligase from Acinetobacter baylyi (strain ATCC 33305 / BD413 / ADP1).